The sequence spans 196 residues: MNNGGKAEKENTPSEANLQEEEVRTLFVSGLPLDIKPRELYLLFRPFKGYEGSLIKLTSKQPVGFVSFDSRSEAEAAKNALNGIRFDPEIPQTLRLEFAKANTKMAKNKLVGTPNPSTPLPNTVPQFIAREPYELTVPALYPSSPEVWAPYPLYPAELAPALPPPAFTYPASLHAQMRWLPPSEATSQGWKSRQFC.

N-acetylmethionine is present on Met1. Thr12 carries the phosphothreonine modification. Residues Arg24–Ala101 form the RRM domain. Residues Phe98–Met105 form an interaction with RNA region. Thr113 carries the phosphothreonine modification.

Homodimer; each protein chain binds one RNA molecule via the external surface of the homodimer. Interacts with RNA binding proteins MBNL1, RBFOX2, RBM4 and RBM14; the interaction allows cooperative assembly of stable cell-specific alternative splicing regulatory complexes. Interacts with SMAD2, SMAD3 and SMAD4; the interactions are direct. In terms of tissue distribution, ubiquitously expressed, at various levels depending on the isoform and the tissue. Strongly expressed in the heart, prostate, small intestine, large intestine, and ovary; moderately expressed in the placenta, lung, liver, kidney, pancreas, and testis; and poorly expressed in the skeletal muscle, spleen, thymus and peripheral leukocytes.

It localises to the nucleus. The protein resides in the cytoplasm. It is found in the stress granule. Its subcellular location is the P-body. In terms of biological role, RNA binding protein that mediates the regulation of pre-mRNA alternative splicing (AS). Acts either as activator (FLNB, HSPG2, LIPA1, MYOCD, PTPRF and PPFIBP1) or repressor (TPM1, ACTN1, ITGA7, PIEZO1, LSM14B, MBNL1 and MBML2) of splicing events on specific pre-mRNA targets. Together with RNA binding proteins RBFOX2 and MBNL1/2, activates a splicing program associated with differentiated contractile vascular smooth muscle cells (SMC) by regulating AS of numerous pre-mRNA involved in actin cytoskeleton and focal adhesion machineries, suggesting a role in promoting a cell differentiated state. Binds to introns, exons and 3'-UTR associated with tandem CAC trinucleotide motifs separated by a variable spacer region, at a minimum as a dimer. The minimal length of RNA required for RBPMS-binding tandem CAC motifs is 15 nt, with spacing ranging from 1 to 9 nt. Can also bind to CA dinucleotide repeats. Mediates repression of TPM1 exon 3 by binding to CAC tandem repeats in the flanking intronic regions, followed by higher-order oligomerization and heterotypic interactions with other splicing regulators including MBNL1 and RBFOX2, which prevents assembly of ATP-dependent splicing complexes. Acts as a regulator of pre-mRNA alternative splicing (AS). Binds mRNA. Regulates AS of ACTN1, FLNB, although with lower efficiency than isoform A / RBPMSA. Acts as coactivator of SMAD transcriptional activity in a TGFB1-dependent manner, possibly through increased phosphorylation of SMAD2 and SMAD3 at the C-terminal SSXS regions and promotion of the nuclear accumulation of SMAD proteins. The protein is RNA-binding protein with multiple splicing of Homo sapiens (Human).